Here is a 3411-residue protein sequence, read N- to C-terminus: Genome polyprotein (3411 aa).

Topologically, residues 1–104 (MSGRKAQGKT…LSSRKRRSHD (104 aa)) are cytoplasmic. Residues 38–72 (PGPSRGVQGFIFFFLFNILTGKKITAHLKRLWKML) are hydrophobic; homodimerization of capsid protein C. A propeptide spans 102 to 121 (SHDVLTVQFLILGMLLMTGG) (ER anchor for the capsid protein C, removed in mature form by serine protease NS3). A helical transmembrane segment spans residues 105–125 (VLTVQFLILGMLLMTGGVTLV). Residues 126–244 (RKNRWLLLNV…GERQLQKIER (119 aa)) are Extracellular-facing. 2 N-linked (GlcNAc...) asparagine; by host glycosylation sites follow: Asn134 and Asn150. The chain crosses the membrane as a helical span at residues 245–265 (WFVRNPFFAVTALTIAYLVGS). The Cytoplasmic segment spans residues 266–270 (NMTQR). The chain crosses the membrane as a helical span at residues 271–285 (VVIALLVLAVGPAYS). Residues 286-730 (AHCIGITDRD…TVFGSAFQGL (445 aa)) are Extracellular-facing. Intrachain disulfides connect Cys288–Cys315, Cys345–Cys401, Cys345–Cys406, Cys359–Cys390, Cys377–Cys401, Cys377–Cys406, Cys467–Cys568, and Cys585–Cys615. Residues 383-396 (DRGWGNGCGLFGKG) are fusion peptide. The chain crosses the membrane as a helical span at residues 731 to 751 (FGGLNWITKVIIGAVLIWVGI). The Extracellular segment spans residues 752-757 (NTRNMT). A helical membrane pass occupies residues 758-778 (MSMSMILVGVIMMFLSLGVGA). The Extracellular segment spans residues 779–1132 (DQGCAINFAK…LVRSWVTAGE (354 aa)). 6 disulfide bridges follow: Cys782-Cys793, Cys833-Cys921, Cys957-Cys1002, Cys1058-Cys1107, Cys1069-Cys1091, and Cys1090-Cys1094. N-linked (GlcNAc...) asparagine; by host glycans are attached at residues Asn908 and Asn986. The chain crosses the membrane as a helical span at residues 1133-1153 (IHAVPFGLVSMMIALEVVLRK). Topologically, residues 1154-1201 (RQGPKQMLVGGVVLLGAMLVGQVTLLDLLKLTVAVGLHFHEMNNGGDA) are cytoplasmic. The chain crosses the membrane as a helical span at residues 1202 to 1222 (MYMALIAAFSVRPGLLIGFGL). At 1223–1287 (RTLWSPRERL…ILPLMALLTP (65 aa)) the chain is on the lumenal side. Residues 1288–1308 (VTMAEVRLATMLFCTVVIIGV) traverse the membrane as a helical segment. Over 1309 to 1355 (LYQNSKDTSMQKTIPLVALTLTSYLGLTQPFLGLCAFLATRIFGRRS) the chain is Cytoplasmic. Residues 1356-1376 (IPVNEALAAAGLVGVLAGLAF) traverse the membrane as a helical segment. At 1377–1378 (QE) the chain is on the lumenal side. Residues 1379–1399 (MENFLGPIAVGGILMMLVSVA) traverse the membrane as a helical segment. At 1400–1456 (GRVDGLELKKLGEVAWEEEAEISGSSARYDVALSEQGEFKLLSEEKVPWDQVVMTSL) the chain is on the cytoplasmic side. The tract at residues 1407–1446 (LKKLGEVAWEEEAEISGSSARYDVALSEQGEFKLLSEEKV) is interacts with and activates NS3 protease. Positions 1457–1477 (ALVGAAIHPFALLLVLAGWLF) form an intramembrane region, helical. The Cytoplasmic portion of the chain corresponds to 1478-2157 (HVRGARRSGD…RNALSMMPEA (680 aa)). Residues 1485–1665 (SGDVLWDIPT…EVKEEGKEEL (181 aa)) form the Peptidase S7 domain. Catalysis depends on charge relay system; for serine protease NS3 activity residues His1537, Asp1561, and Ser1622. Positions 1669–1825 (PTMLKKGKTT…HSNGEIEDVQ (157 aa)) constitute a Helicase ATP-binding domain. The tract at residues 1673 to 1676 (KKGK) is important for RNA-binding. 1682–1689 (FHPGAGKT) contacts ATP. The DEAH box motif lies at 1773 to 1776 (DEAH). Positions 1820 to 1997 (EIEDVQTDIP…VRGGMVAPLY (178 aa)) constitute a Helicase C-terminal domain. An N6-acetyllysine; by host modification is found at Lys1877. A disordered region spans residues 1942–1961 (AAQRRGRIGRNPNRDGDSYY). A helical membrane pass occupies residues 2158–2178 (MTIVMLFILAGLLTSGMVIFF). Residues 2179-2186 (MSPKGISR) lie on the Lumenal side of the membrane. An intramembrane region (helical) is located at residues 2187 to 2207 (MSMAMGTMAGCGYLMFLGGVK). Residues 2208-2209 (PT) lie on the Lumenal side of the membrane. Residues 2210 to 2230 (HISYIMLIFFVLMVVVIPEPG) form a helical membrane-spanning segment. The Cytoplasmic portion of the chain corresponds to 2231–2241 (QQRSIQDNQVA). The helical transmembrane segment at 2242 to 2262 (FLIIGILTLVSVVAANELGML) threads the bilayer. At 2263-2293 (EKTKEDLFGKKNSIPSSASPWSWPDLDLKPG) the chain is on the lumenal side. Residues 2294–2314 (AAWTVYVGIVTMLSPMLHHWI) constitute an intramembrane region (helical). Over 2315–2360 (KVEYGNLSLSGIAQSASVLSFMDKGIPFMKMNISVIMLLISGWNSI) the chain is Lumenal. A helical membrane pass occupies residues 2361–2380 (TVMPLLCGIGCAMLHWSLIL). Residues 2381-2421 (PGIKAQQSKLAQRRVFHGVAKNPVVDGNPTVDIEEAPEMPV) are Cytoplasmic-facing. The chain crosses the membrane as a helical span at residues 2422 to 2442 (LYEKKLALYLLLALSLASVAM). Over 2443 to 2445 (CRT) the chain is Lumenal. The helical transmembrane segment at 2446–2466 (PFSLAEGIVLASAALGPLIEG) threads the bilayer. The Cytoplasmic portion of the chain corresponds to 2467–3411 (NTSLLWNGPM…DADLQPGELI (945 aa)). The 265-residue stretch at 2507 to 2771 (GTANGKTLGE…DVTLPIGTRS (265 aa)) folds into the mRNA cap 0-1 NS5-type MT domain. Ser2562 serves as a coordination point for S-adenosyl-L-methionine. Ser2562 carries the phosphoserine modification. Lys2567 acts as the For 2'-O-MTase activity in catalysis. Residues Gly2592, Trp2593, Thr2610, Leu2611, Asp2637, and Ile2638 each coordinate S-adenosyl-L-methionine. The active-site For 2'-O-MTase activity is the Asp2652. Ile2653 contributes to the S-adenosyl-L-methionine binding site. Residues Lys2688 and Glu2724 each act as for 2'-O-MTase activity in the active site. Tyr2726 lines the S-adenosyl-L-methionine pocket. The Nuclear localization signal signature appears at 2878–2911 (RKIMKVVNRWLFRHLAREKNPRLCTKEEFIAKVR). Zn(2+) is bound by residues Glu2945, His2949, Cys2954, and Cys2957. The region spanning 3035–3187 (GGFYADDTAG…RPIDDRFGLA (153 aa)) is the RdRp catalytic domain. Zn(2+) is bound by residues His3222, Cys3238, and Cys3357.

It in the N-terminal section; belongs to the class I-like SAM-binding methyltransferase superfamily. mRNA cap 0-1 NS5-type methyltransferase family. Homodimer. Interacts (via N-terminus) with host EXOC1 (via C-terminus); this interaction results in EXOC1 degradation through the proteasome degradation pathway. In terms of assembly, forms heterodimers with envelope protein E in the endoplasmic reticulum and Golgi. As to quaternary structure, homodimer; in the endoplasmic reticulum and Golgi. Interacts with protein prM. Interacts with non-structural protein 1. Homodimer; Homohexamer when secreted. Interacts with envelope protein E. In terms of assembly, interacts (via N-terminus) with serine protease NS3. As to quaternary structure, forms a heterodimer with serine protease NS3. May form homooligomers. Forms a heterodimer with NS2B. Interacts with non-structural protein 2A (via N-terminus). Interacts with NS4B. Interacts with unphosphorylated RNA-directed RNA polymerase NS5; this interaction stimulates RNA-directed RNA polymerase NS5 guanylyltransferase activity. NS3 interacts with host PDCD6IP; this interaction contributes to virion release. In terms of assembly, interacts with serine protease NS3. As to quaternary structure, homodimer. Interacts with host STAT2; this interaction prevents the establishment of cellular antiviral state. Interacts with serine protease NS3. Interacts with host TRIM23; this interaction leads to NS5 ubiquitination. Specific enzymatic cleavages in vivo yield mature proteins. The nascent capsid protein C contains a C-terminal hydrophobic domain that act as a signal sequence for translocation of prM into the lumen of the ER. Mature capsid protein C is cleaved at a site upstream of this hydrophobic domain by NS3. prM is cleaved in post-Golgi vesicles by a host furin, releasing the mature small envelope protein M, and peptide pr. Non-structural protein 2A-alpha, a C-terminally truncated form of non-structural protein 2A, results from partial cleavage by NS3. Specific enzymatic cleavages in vivo yield mature proteins peptide 2K acts as a signal sequence and is removed from the N-terminus of NS4B by the host signal peptidase in the ER lumen. Signal cleavage at the 2K-4B site requires a prior NS3 protease-mediated cleavage at the 4A-2K site. Post-translationally, cleaved in post-Golgi vesicles by a host furin, releasing the mature small envelope protein M, and peptide pr. This cleavage is incomplete as up to 30% of viral particles still carry uncleaved prM. In terms of processing, N-glycosylated. N-glycosylated. The excreted form is glycosylated and this is required for efficient secretion of the protein from infected cells. Post-translationally, polyubiquitinated; ubiquitination is probably mediated by host TRIM23 and is prerequisite for NS5-STAT2 interaction. NS5 is not ISGylated or sumoylated. In terms of processing, phosphorylated on serines residues. This phosphorylation may trigger NS5 nuclear localization. Acetylated by host KAT5. Acetylation modulates NS3 RNA-binding and -unwinding activities and plays an important role for viral replication.

Its subcellular location is the virion. It is found in the host nucleus. The protein localises to the host cytoplasm. The protein resides in the host perinuclear region. It localises to the secreted. Its subcellular location is the virion membrane. It is found in the host endoplasmic reticulum membrane. The enzyme catalyses Selective hydrolysis of -Xaa-Xaa-|-Yaa- bonds in which each of the Xaa can be either Arg or Lys and Yaa can be either Ser or Ala.. It catalyses the reaction RNA(n) + a ribonucleoside 5'-triphosphate = RNA(n+1) + diphosphate. It carries out the reaction a ribonucleoside 5'-triphosphate + H2O = a ribonucleoside 5'-diphosphate + phosphate + H(+). The catalysed reaction is ATP + H2O = ADP + phosphate + H(+). The enzyme catalyses a 5'-end (5'-triphosphoguanosine)-ribonucleoside in mRNA + S-adenosyl-L-methionine = a 5'-end (N(7)-methyl 5'-triphosphoguanosine)-ribonucleoside in mRNA + S-adenosyl-L-homocysteine. It catalyses the reaction a 5'-end (N(7)-methyl 5'-triphosphoguanosine)-ribonucleoside in mRNA + S-adenosyl-L-methionine = a 5'-end (N(7)-methyl 5'-triphosphoguanosine)-(2'-O-methyl-ribonucleoside) in mRNA + S-adenosyl-L-homocysteine + H(+). Functionally, plays a role in virus budding by binding to the cell membrane and gathering the viral RNA into a nucleocapsid that forms the core of a mature virus particle. During virus entry, may induce genome penetration into the host cytoplasm after hemifusion induced by the surface proteins. Can migrate to the cell nucleus where it modulates host functions. Its function is as follows. Inhibits RNA silencing by interfering with host Dicer. Prevents premature fusion activity of envelope proteins in trans-Golgi by binding to envelope protein E at pH6.0. After virion release in extracellular space, gets dissociated from E dimers. In terms of biological role, acts as a chaperone for envelope protein E during intracellular virion assembly by masking and inactivating envelope protein E fusion peptide. prM is the only viral peptide matured by host furin in the trans-Golgi network probably to avoid catastrophic activation of the viral fusion activity in acidic Golgi compartment prior to virion release. prM-E cleavage is inefficient, and many virions are only partially matured. These uncleaved prM would play a role in immune evasion. Functionally, may play a role in virus budding. Exerts cytotoxic effects by activating a mitochondrial apoptotic pathway through M ectodomain. May display a viroporin activity. Its function is as follows. Binds to host cell surface receptor and mediates fusion between viral and cellular membranes. Envelope protein is synthesized in the endoplasmic reticulum in the form of heterodimer with protein prM. They play a role in virion budding in the ER, and the newly formed immature particle is covered with 60 spikes composed of heterodimer between precursor prM and envelope protein E. The virion is transported to the Golgi apparatus where the low pH causes dissociation of PrM-E heterodimers and formation of E homodimers. prM-E cleavage is inefficient, and many virions are only partially matured. These uncleaved prM would play a role in immune evasion. Involved in immune evasion, pathogenesis and viral replication. Once cleaved off the polyprotein, is targeted to three destinations: the viral replication cycle, the plasma membrane and the extracellular compartment. Essential for viral replication. Required for formation of the replication complex and recruitment of other non-structural proteins to the ER-derived membrane structures. Excreted as a hexameric lipoparticle that plays a role against host immune response. Antagonizing the complement function. Binds to the host macrophages and dendritic cells. Inhibits signal transduction originating from Toll-like receptor 3 (TLR3). In terms of biological role, component of the viral RNA replication complex that functions in virion assembly and antagonizes the host immune response. Functionally, required cofactor for the serine protease function of NS3. May have membrane-destabilizing activity and form viroporins. Its function is as follows. Displays three enzymatic activities: serine protease, NTPase and RNA helicase. NS3 serine protease, in association with NS2B, performs its autocleavage and cleaves the polyprotein at dibasic sites in the cytoplasm: C-prM, NS2A-NS2B, NS2B-NS3, NS3-NS4A, NS4A-2K and NS4B-NS5. NS3 RNA helicase binds RNA and unwinds dsRNA in the 3' to 5' direction. Also plays a role in virus assembly. Regulates the ATPase activity of the NS3 helicase activity. NS4A allows NS3 helicase to conserve energy during unwinding. In terms of biological role, functions as a signal peptide for NS4B and is required for the interferon antagonism activity of the latter. Functionally, induces the formation of ER-derived membrane vesicles where the viral replication takes place. Inhibits interferon (IFN)-induced host STAT1 phosphorylation and nuclear translocation, thereby preventing the establishment of cellular antiviral state by blocking the IFN-alpha/beta pathway. Its function is as follows. Replicates the viral (+) and (-) RNA genome, and performs the capping of genomes in the cytoplasm. NS5 methylates viral RNA cap at guanine N-7 and ribose 2'-O positions. Besides its role in RNA genome replication, also prevents the establishment of cellular antiviral state by blocking the interferon-alpha/beta (IFN-alpha/beta) signaling pathway. IFN-I induces binding of NS5 to host IFN-activated transcription factor STAT2, preventing its transcriptional activity. Host TRIM23 is the E3 ligase that interacts with and polyubiquitinates NS5 to promote its binding to STAT2 and trigger IFN-I signaling inhibition. The sequence is that of Genome polyprotein from Yellow fever virus (strain French neurotropic vaccine FNV) (YFV).